The primary structure comprises 302 residues: tRNA demethylase abh1 (302 aa).

Residues Trp-142 and 149 to 151 (YDW) each bind substrate. The region spanning 187 to 299 (KAEAAIVNFY…RVNFNVRQVR (113 aa)) is the Fe2OG dioxygenase domain. Position 194-196 (194-196 (NFY)) interacts with 2-oxoglutarate. Fe cation contacts are provided by His-205 and Asp-207. Residue Arg-235 coordinates substrate. A Fe cation-binding site is contributed by His-261. A 2-oxoglutarate-binding site is contributed by 290–296 (RVNFNVR).

It belongs to the alkB family. It depends on Fe(2+) as a cofactor.

Its subcellular location is the cytoplasm. It is found in the nucleus. The enzyme catalyses an N(1)-methyladenosine in tRNA + 2-oxoglutarate + O2 = an adenosine in tRNA + formaldehyde + succinate + CO2. It carries out the reaction N(1)-methyladenosine(58) in tRNA + 2-oxoglutarate + O2 = adenosine(58) in tRNA + formaldehyde + succinate + CO2. Functionally, dioxygenase that acts as on nucleic acids, such as DNA and tRNA. Requires molecular oxygen, alpha-ketoglutarate and iron. Mainly acts as a tRNA demethylase by removing N(1)-methyladenine from various tRNAs, with a preference for N(1)-methyladenine at position 58 (m1A58) present on a stem loop structure of tRNAs. Acts as a regulator of translation initiation and elongation. Does not appear to possess DNA repair activity; no activity towards methylated DNA or etheno adducts. Exhibits a weak and unstable DNA lyase activity; this activity is probably not biologically significant and proceeds by a mechanism different from the classical dioxygenase reaction as it does not require 2-oxoglutarate or iron. The chain is tRNA demethylase abh1 (abh1) from Schizosaccharomyces pombe (strain 972 / ATCC 24843) (Fission yeast).